A 776-amino-acid chain; its full sequence is Protein SEY1 (776 aa).

At 1 to 681 (MADRSAIQLI…KRSIITTRTH (681 aa)) the chain is on the cytoplasmic side. The 230-residue stretch at 34-263 (GLDYHVISVF…TENYYFKPQY (230 aa)) folds into the GB1/RHD3-type G domain. 44–51 (GSQSSGKS) is a GTP binding site. A helical membrane pass occupies residues 682–702 (IPPWIYVLLAVLGWNEFVAVI). The Lumenal portion of the chain corresponds to 703–705 (RNP). A helical membrane pass occupies residues 706-726 (LFVTLTLILGATFFVIHKFGL). At 727–776 (WGPVVNVVQSAVGETRTAIKDKLRQFVVEDHEVKESFEMKDFSKNEQKEK) the chain is on the cytoplasmic side.

Belongs to the TRAFAC class dynamin-like GTPase superfamily. GB1/RHD3 GTPase family. RHD3 subfamily. In terms of assembly, interacts with RTN1 and YOP1; GTP binding is not required for these interactions.

The protein resides in the endoplasmic reticulum membrane. Its function is as follows. Cooperates with the reticulon proteins RTN1 and RTN2 and the tubule-shaping DP1 family protein YOP1 to generate and maintain the structure of the tubular endoplasmic reticulum network. Has GTPase activity, which is required for its function in ER organization. This chain is Protein SEY1, found in Saccharomyces cerevisiae (strain AWRI1631) (Baker's yeast).